A 595-amino-acid polypeptide reads, in one-letter code: Transketolase-like protein 1 (595 aa).

93–95 (GWP) provides a ligand contact to thiamine diphosphate. Mg(2+) contacts are provided by Asp-125, Asn-155, and Ile-157. Thiamine diphosphate is bound at residue Asn-155. Thiamine diphosphate contacts are provided by Lys-217, Glu-339, and Phe-365. Glu-339 serves as the catalytic Proton donor. Substrate contacts are provided by His-389 and Asp-397. Residue His-401 coordinates thiamine diphosphate.

This sequence belongs to the transketolase family. Homodimer. Mg(2+) serves as cofactor. It depends on Ca(2+) as a cofactor. Mn(2+) is required as a cofactor. Requires Co(2+) as cofactor. The cofactor is thiamine diphosphate. In terms of tissue distribution, not expressed in the embryonic neocortex.

The protein localises to the cytoplasm. It catalyses the reaction D-sedoheptulose 7-phosphate + D-glyceraldehyde 3-phosphate = aldehydo-D-ribose 5-phosphate + D-xylulose 5-phosphate. Functionally, catalyzes the transfer of a two-carbon ketol group from a ketose donor to an aldose acceptor, via a covalent intermediate with the cofactor thiamine pyrophosphate. This chain is Transketolase-like protein 1, found in Mus musculus (Mouse).